The primary structure comprises 240 residues: MQTIALVDDDRNILTSVSIALEAEGYKVETYTDGASALEGLLARPPQLAIFDIKMPRMDGMELLRRLRQKSDLPVIFLTSKDEEIDELFGLKMGADDFITKPFSQRLLVERVKAILRRAANREAAAGGTGPAKNADTPSRSLERGQLVMDQERHTCTWKNESVTLTVTEFLILHALAQRPGVVKSRDALMDAAYDEQVYVDDRTIDSHIKRLRKKFKMVDNDFDMIETLYGVGYRFRETA.

A Response regulatory domain is found at 3–116; that stretch reads TIALVDDDRN…LLVERVKAIL (114 aa). D8, D9, and D52 together coordinate Mg(2+). D52 is subject to 4-aspartylphosphate. Residues 139–238 constitute a DNA-binding region (ompR/PhoB-type); it reads SRSLERGQLV…LYGVGYRFRE (100 aa).

Mg(2+) serves as cofactor. Phosphorylated by ChvG.

Its subcellular location is the cytoplasm. The protein operates within glycan metabolism; exopolysaccharide biosynthesis. Member of a two-component regulatory system ChvG(ExoS)/ChvI involved in regulating the production of succinoglycan. The protein is Transcriptional regulatory protein ChvI (chvI) of Rhizobium meliloti (strain 1021) (Ensifer meliloti).